Consider the following 309-residue polypeptide: Tyrosine recombinase XerD (309 aa).

One can recognise a Core-binding (CB) domain in the interval 3–88 (MRASLAIENF…ALRQFFRFLY (86 aa)). A Tyr recombinase domain is found at 109–302 (PLPKIMSVEN…LEERLHKLVS (194 aa)). Active-site residues include Arg-158, Lys-182, His-254, Arg-257, and His-280. The active-site O-(3'-phospho-DNA)-tyrosine intermediate is Tyr-289.

It belongs to the 'phage' integrase family. XerD subfamily. Forms a cyclic heterotetrameric complex composed of two molecules of XerC and two molecules of XerD.

Its subcellular location is the cytoplasm. Site-specific tyrosine recombinase, which acts by catalyzing the cutting and rejoining of the recombining DNA molecules. The XerC-XerD complex is essential to convert dimers of the bacterial chromosome into monomers to permit their segregation at cell division. It also contributes to the segregational stability of plasmids. This Brucella suis biovar 1 (strain 1330) protein is Tyrosine recombinase XerD.